Reading from the N-terminus, the 229-residue chain is Large ribosomal subunit protein uL1 (229 aa).

This sequence belongs to the universal ribosomal protein uL1 family. As to quaternary structure, part of the 50S ribosomal subunit.

Functionally, binds directly to 23S rRNA. The L1 stalk is quite mobile in the ribosome, and is involved in E site tRNA release. Its function is as follows. Protein L1 is also a translational repressor protein, it controls the translation of the L11 operon by binding to its mRNA. The chain is Large ribosomal subunit protein uL1 from Mannheimia succiniciproducens (strain KCTC 0769BP / MBEL55E).